The following is a 407-amino-acid chain: uncharacterized protein (407 aa).

This is an uncharacterized protein from Saimiriine herpesvirus 2 (strain 11) (SaHV-2).